Consider the following 455-residue polypeptide: Tumor necrosis factor receptor superfamily member 1A (455 aa).

Residues 1–29 (MGLSTVPDLLLPLVLLELLVGIYPSGVIG) form the signal peptide. The Extracellular portion of the chain corresponds to 30 to 211 (LVPHLGDREK…VKGTEDSGTT (182 aa)). 4 TNFR-Cys repeats span residues 43–82 (VCPQ…TDCR), 83–125 (ECES…DTVC), 126–166 (GCRK…NTVC), and 167–196 (TCHA…KLCL). Cystine bridges form between cysteine 44–cysteine 58, cysteine 59–cysteine 72, cysteine 62–cysteine 81, cysteine 84–cysteine 99, cysteine 102–cysteine 117, cysteine 105–cysteine 125, and cysteine 127–cysteine 143. Asparagine 54 carries N-linked (GlcNAc...) asparagine glycosylation. N-linked (GlcNAc...) asparagine glycans are attached at residues asparagine 145 and asparagine 151. Disulfide bonds link cysteine 146/cysteine 158, cysteine 149/cysteine 166, cysteine 168/cysteine 179, cysteine 182/cysteine 195, and cysteine 185/cysteine 191. Residues 212–232 (VLLPLVIFFGLCLLSLLFIGL) form a helical membrane-spanning segment. Residues 233 to 455 (MYRYQRWKSK…ALPPAPSLLR (223 aa)) lie on the Cytoplasmic side of the membrane. The segment at 254–273 (EKEGELEGTTTKPLAPNPSF) is disordered. The interval 338-348 (LQKWEDSAHKP) is N-SMase activation domain (NSD). The region spanning 356–441 (PATLYAVVEN…GCLEDIEEAL (86 aa)) is the Death domain. (Microbial infection) N-beta-linked (GlcNAc) arginine glycosylation occurs at arginine 376.

Binding of TNF to the extracellular domain leads to homotrimerization. The aggregated death domains provide a novel molecular interface that interacts specifically with the death domain of TRADD. Various TRADD-interacting proteins such as TRAFS, RIPK1 and possibly FADD, are recruited to the complex by their association with TRADD. This complex activates at least two distinct signaling cascades, apoptosis and NF-kappa-B signaling. Interacts with BAG4, BABAM2, FEM1B, GRB2, SQSTM1 and TRPC4AP. Interacts directly with NOL3 (via CARD domain); inhibits TNF-signaling pathway. Interacts with SH3RF2, TRADD and RIPK1. SH3RF2 facilitates the recruitment of RIPK1 and TRADD to TNFRSF1A in a TNF-alpha-dependent process. Interacts with PGLYRP1; this interaction is important for cell death induction. Interacts (via death domain) with MADD (via death domain). In terms of assembly, (Microbial infection) Interacts with mumps virus protein SH; this interaction inhibits downstream NF-kappa-B pathway activation. As to quaternary structure, (Microbial infection) Interacts with HCV core protein. (Microbial infection) Interacts with human cytomegalovirus/HHV-5 protein UL138. In terms of assembly, (Microbial infection) Interacts with host TNFRSF1A; this interaction leads to the stimulation of both surface expression and shedding of TNFRSF1A. In terms of processing, the soluble form is produced from the membrane form by proteolytic processing. (Microbial infection) Glycosylated at Arg-376 by enteropathogenic E.coli protein NleB1 and S.typhimurium protein Ssek3: arginine GlcNAcylation prevents homotypic/heterotypic death domain interactions.

The protein resides in the cell membrane. It is found in the golgi apparatus membrane. Its subcellular location is the secreted. Its function is as follows. Receptor for TNFSF2/TNF-alpha and homotrimeric TNFSF1/lymphotoxin-alpha. The adapter molecule FADD recruits caspase-8 to the activated receptor. The resulting death-inducing signaling complex (DISC) performs caspase-8 proteolytic activation which initiates the subsequent cascade of caspases (aspartate-specific cysteine proteases) mediating apoptosis. Contributes to the induction of non-cytocidal TNF effects including anti-viral state and activation of the acid sphingomyelinase. This chain is Tumor necrosis factor receptor superfamily member 1A (TNFRSF1A), found in Homo sapiens (Human).